A 184-amino-acid chain; its full sequence is Putative manganese efflux pump MntP (184 aa).

6 helical membrane-spanning segments follow: residues 3-23 (LLSM…ISVS), 36-56 (ALIS…LGWV), 65-85 (VSAL…LKMI), 103-123 (LLVL…SFAL), 126-146 (ISIW…SLAG), and 163-183 (ALGG…NVSF).

The protein belongs to the MntP (TC 9.B.29) family.

The protein resides in the cell membrane. Functionally, probably functions as a manganese efflux pump. This is Putative manganese efflux pump MntP from Methanothermobacter thermautotrophicus (strain ATCC 29096 / DSM 1053 / JCM 10044 / NBRC 100330 / Delta H) (Methanobacterium thermoautotrophicum).